A 105-amino-acid chain; its full sequence is Small ribosomal subunit protein uS10 (105 aa).

The protein belongs to the universal ribosomal protein uS10 family. Part of the 30S ribosomal subunit.

In terms of biological role, involved in the binding of tRNA to the ribosomes. This is Small ribosomal subunit protein uS10 from Rickettsia typhi (strain ATCC VR-144 / Wilmington).